Here is a 370-residue protein sequence, read N- to C-terminus: N-acetyltaurine hydrolase (370 aa).

A divalent metal cation is bound by residues His26, His28, Glu189, His221, His250, and Asp318.

This sequence belongs to the metallo-dependent hydrolases superfamily. Phosphotriesterase family. A divalent metal cation serves as cofactor.

Its subcellular location is the cytoplasm. The protein resides in the cytosol. The catalysed reaction is N-acetyltaurine + H2O = taurine + acetate. Its function is as follows. N-acetyltaurine hydrolase catalyzes the hydrolysis of N-acetyltaurine into taurine and acetate. The protein is N-acetyltaurine hydrolase (pter) of Dictyostelium discoideum (Social amoeba).